A 108-amino-acid polypeptide reads, in one-letter code: NADH dehydrogenase [ubiquinone] flavoprotein 3, mitochondrial (108 aa).

A mitochondrion-targeting transit peptide spans 1–34 (MAAPCLLRQGRAGALKTMLQEAQVFRGLASTVSL). The disordered stretch occupies residues 33–72 (SLSAESGKSEKGQPQNSKKQSPPKKPAPVPAEPFDNTTYK). At Ser105 the chain carries Phosphoserine.

It belongs to the complex I NDUFV3 subunit family. As to quaternary structure, complex I is composed of 45 different subunits. This is a component of the flavoprotein-sulfur (FP) fragment of the enzyme.

Its subcellular location is the mitochondrion inner membrane. Its function is as follows. Accessory subunit of the mitochondrial membrane respiratory chain NADH dehydrogenase (Complex I), that is believed not to be involved in catalysis. Complex I functions in the transfer of electrons from NADH to the respiratory chain. The immediate electron acceptor for the enzyme is believed to be ubiquinone. May be the terminally assembled subunit of Complex I. The polypeptide is NADH dehydrogenase [ubiquinone] flavoprotein 3, mitochondrial (NDUFV3) (Homo sapiens (Human)).